Here is a 417-residue protein sequence, read N- to C-terminus: UDP-N-acetylglucosamine 1-carboxyvinyltransferase (417 aa).

Lysine 22–asparagine 23 is a phosphoenolpyruvate binding site. Arginine 93 is a binding site for UDP-N-acetyl-alpha-D-glucosamine. The active-site Proton donor is the cysteine 117. Cysteine 117 is subject to 2-(S-cysteinyl)pyruvic acid O-phosphothioketal. UDP-N-acetyl-alpha-D-glucosamine is bound by residues arginine 122–glutamine 126, aspartate 304, and isoleucine 326.

It belongs to the EPSP synthase family. MurA subfamily.

It localises to the cytoplasm. It carries out the reaction phosphoenolpyruvate + UDP-N-acetyl-alpha-D-glucosamine = UDP-N-acetyl-3-O-(1-carboxyvinyl)-alpha-D-glucosamine + phosphate. The protein operates within cell wall biogenesis; peptidoglycan biosynthesis. Its function is as follows. Cell wall formation. Adds enolpyruvyl to UDP-N-acetylglucosamine. This is UDP-N-acetylglucosamine 1-carboxyvinyltransferase from Neisseria meningitidis serogroup C (strain 053442).